The chain runs to 490 residues: 3-octaprenyl-4-hydroxybenzoate carboxy-lyase (490 aa).

A Mn(2+)-binding site is contributed by Asn-172. Prenylated FMN is bound by residues 175 to 177 (IYR), 189 to 191 (RWL), and 194 to 195 (RG). Glu-238 is a Mn(2+) binding site. Asp-287 serves as the catalytic Proton donor.

The protein belongs to the UbiD family. As to quaternary structure, homohexamer. It depends on prenylated FMN as a cofactor. Mn(2+) serves as cofactor.

The protein resides in the cell membrane. It carries out the reaction a 4-hydroxy-3-(all-trans-polyprenyl)benzoate + H(+) = a 2-(all-trans-polyprenyl)phenol + CO2. It participates in cofactor biosynthesis; ubiquinone biosynthesis. Functionally, catalyzes the decarboxylation of 3-octaprenyl-4-hydroxy benzoate to 2-octaprenylphenol, an intermediate step in ubiquinone biosynthesis. This Idiomarina loihiensis (strain ATCC BAA-735 / DSM 15497 / L2-TR) protein is 3-octaprenyl-4-hydroxybenzoate carboxy-lyase.